The chain runs to 507 residues: Keratin, type II cuticular Hb5 (507 aa).

Residues 1–123 (MSCRSYRISP…PNAQCVKYEE (123 aa)) are head. The IF rod domain occupies 123–434 (EKEQIKCLNS…RLLEGEEQRL (312 aa)). The coil 1A stretch occupies residues 124 to 158 (KEQIKCLNSKFAAFIDKVRFLEQQNKLLETKWQFY). A linker 1 region spans residues 159-168 (QNRKCCESNL). The tract at residues 169–269 (EPLFGGYIEA…YEEEVCVLQA (101 aa)) is coil 1B. Residue K229 forms a Glycyl lysine isopeptide (Lys-Gly) (interchain with G-Cter in SUMO1) linkage. Residues 270–286 (HISDTSVIVKMDNSRDL) are linker 12. The interval 287–430 (NMDCVVAEIK…ATYRRLLEGE (144 aa)) is coil 2. A tail region spans residues 431 to 507 (EQRLCEGVGS…CGSSRSVRFA (77 aa)).

It belongs to the intermediate filament family. As to quaternary structure, heterotetramer of two type I and two type II keratins.

In Mus musculus (Mouse), this protein is Keratin, type II cuticular Hb5 (Krt85).